We begin with the raw amino-acid sequence, 520 residues long: 2-isopropylmalate synthase (520 aa).

A Pyruvate carboxyltransferase domain is found at 12 to 274; that stretch reads IRIFDTTLRD…DTAINTPRIV (263 aa). Mn(2+)-binding residues include Asp21, His209, His211, and Asn245. The regulatory domain stretch occupies residues 396-520; that stretch reads RLASMTISDV…VVAGKTAAVA (125 aa).

Belongs to the alpha-IPM synthase/homocitrate synthase family. LeuA type 1 subfamily. In terms of assembly, homodimer. Mn(2+) is required as a cofactor.

It is found in the cytoplasm. It catalyses the reaction 3-methyl-2-oxobutanoate + acetyl-CoA + H2O = (2S)-2-isopropylmalate + CoA + H(+). Its pathway is amino-acid biosynthesis; L-leucine biosynthesis; L-leucine from 3-methyl-2-oxobutanoate: step 1/4. Functionally, catalyzes the condensation of the acetyl group of acetyl-CoA with 3-methyl-2-oxobutanoate (2-ketoisovalerate) to form 3-carboxy-3-hydroxy-4-methylpentanoate (2-isopropylmalate). The protein is 2-isopropylmalate synthase of Xanthomonas campestris pv. campestris (strain B100).